We begin with the raw amino-acid sequence, 186 residues long: ATP synthase subunit delta (186 aa).

The protein belongs to the ATPase delta chain family. As to quaternary structure, F-type ATPases have 2 components, F(1) - the catalytic core - and F(0) - the membrane proton channel. F(1) has five subunits: alpha(3), beta(3), gamma(1), delta(1), epsilon(1). F(0) has three main subunits: a(1), b(2) and c(10-14). The alpha and beta chains form an alternating ring which encloses part of the gamma chain. F(1) is attached to F(0) by a central stalk formed by the gamma and epsilon chains, while a peripheral stalk is formed by the delta and b chains.

It localises to the cell inner membrane. F(1)F(0) ATP synthase produces ATP from ADP in the presence of a proton or sodium gradient. F-type ATPases consist of two structural domains, F(1) containing the extramembraneous catalytic core and F(0) containing the membrane proton channel, linked together by a central stalk and a peripheral stalk. During catalysis, ATP synthesis in the catalytic domain of F(1) is coupled via a rotary mechanism of the central stalk subunits to proton translocation. Functionally, this protein is part of the stalk that links CF(0) to CF(1). It either transmits conformational changes from CF(0) to CF(1) or is implicated in proton conduction. The chain is ATP synthase subunit delta from Brucella abortus (strain S19).